We begin with the raw amino-acid sequence, 514 residues long: Histidine ammonia-lyase (514 aa).

A cross-link (5-imidazolinone (Ala-Gly)) is located at residues 146–148 (ASG). Serine 147 is subject to 2,3-didehydroalanine (Ser).

Belongs to the PAL/histidase family. Post-translationally, contains an active site 4-methylidene-imidazol-5-one (MIO), which is formed autocatalytically by cyclization and dehydration of residues Ala-Ser-Gly.

Its subcellular location is the cytoplasm. It catalyses the reaction L-histidine = trans-urocanate + NH4(+). The protein operates within amino-acid degradation; L-histidine degradation into L-glutamate; N-formimidoyl-L-glutamate from L-histidine: step 1/3. This is Histidine ammonia-lyase from Clostridium tetani (strain Massachusetts / E88).